The chain runs to 427 residues: Putative F-box protein At3g44060 (427 aa).

Residues 1–46 (MDCLPDDLLVQILYLLPTKEAVSTSVLSKRWRTLFTRSDNLDFHDP) form the F-box domain.

This Arabidopsis thaliana (Mouse-ear cress) protein is Putative F-box protein At3g44060.